A 382-amino-acid chain; its full sequence is UDP-4-amino-4-deoxy-L-arabinose--oxoglutarate aminotransferase (382 aa).

Lysine 183 carries the N6-(pyridoxal phosphate)lysine modification.

Belongs to the DegT/DnrJ/EryC1 family. ArnB subfamily. In terms of assembly, homodimer. Pyridoxal 5'-phosphate serves as cofactor.

The enzyme catalyses UDP-4-amino-4-deoxy-beta-L-arabinose + 2-oxoglutarate = UDP-beta-L-threo-pentopyranos-4-ulose + L-glutamate. It functions in the pathway nucleotide-sugar biosynthesis; UDP-4-deoxy-4-formamido-beta-L-arabinose biosynthesis; UDP-4-deoxy-4-formamido-beta-L-arabinose from UDP-alpha-D-glucuronate: step 2/3. Its pathway is bacterial outer membrane biogenesis; lipopolysaccharide biosynthesis. In terms of biological role, catalyzes the conversion of UDP-4-keto-arabinose (UDP-Ara4O) to UDP-4-amino-4-deoxy-L-arabinose (UDP-L-Ara4N). The modified arabinose is attached to lipid A and is required for resistance to polymyxin and cationic antimicrobial peptides. This Pseudomonas syringae pv. syringae (strain B728a) protein is UDP-4-amino-4-deoxy-L-arabinose--oxoglutarate aminotransferase.